The chain runs to 752 residues: DNA ligase (752 aa).

Residues 48–52, 97–98, and Glu131 each bind NAD(+); these read DADYD and SL. Lys133 functions as the N6-AMP-lysine intermediate in the catalytic mechanism. Arg154, Glu189, Lys305, and Lys329 together coordinate NAD(+). Zn(2+)-binding residues include Cys434, Cys437, Cys452, and Cys458. The segment covering 599–615 has biased composition (basic and acidic residues); the sequence is ADEGRRASLQPQRDKAW. The segment at 599–618 is disordered; it reads ADEGRRASLQPQRDKAWADT. The region spanning 673 to 752 is the BRCT domain; sequence ATQSAVAGLT…EQWLDRIGDA (80 aa).

This sequence belongs to the NAD-dependent DNA ligase family. LigA subfamily. The cofactor is Mg(2+). Requires Mn(2+) as cofactor.

It catalyses the reaction NAD(+) + (deoxyribonucleotide)n-3'-hydroxyl + 5'-phospho-(deoxyribonucleotide)m = (deoxyribonucleotide)n+m + AMP + beta-nicotinamide D-nucleotide.. Its function is as follows. DNA ligase that catalyzes the formation of phosphodiester linkages between 5'-phosphoryl and 3'-hydroxyl groups in double-stranded DNA using NAD as a coenzyme and as the energy source for the reaction. It is essential for DNA replication and repair of damaged DNA. The sequence is that of DNA ligase from Jannaschia sp. (strain CCS1).